We begin with the raw amino-acid sequence, 255 residues long: uncharacterized protein (255 aa).

The first 23 residues, 1 to 23 (MKRLNKLVLGIIFLFLVISITAG), serve as a signal peptide directing secretion. A lipid anchor (N-palmitoyl cysteine) is attached at cysteine 24. Cysteine 24 is lipidated: S-diacylglycerol cysteine.

This sequence belongs to the staphylococcal tandem lipoprotein family.

It is found in the cell membrane. This is an uncharacterized protein from Staphylococcus aureus (strain USA300).